The following is a 764-amino-acid chain: 5-methyltetrahydropteroyltriglutamate--homocysteine methyltransferase (764 aa).

5-methyltetrahydropteroyltri-L-glutamate is bound by residues 16–19 and Lys-115; that span reads RELK. Residues 435-437 and Glu-488 each bind L-homocysteine; that span reads IGS. L-methionine contacts are provided by residues 435-437 and Glu-488; that span reads IGS. Residues 519–520 and Trp-565 contribute to the 5-methyltetrahydropteroyltri-L-glutamate site; that span reads RC. Asp-603 contributes to the L-homocysteine binding site. Asp-603 provides a ligand contact to L-methionine. A 5-methyltetrahydropteroyltri-L-glutamate-binding site is contributed by Glu-609. Zn(2+) contacts are provided by His-645, Cys-647, and Glu-669. The Proton donor role is filled by His-698. Position 730 (Cys-730) interacts with Zn(2+).

This sequence belongs to the vitamin-B12 independent methionine synthase family. It depends on Zn(2+) as a cofactor.

The catalysed reaction is 5-methyltetrahydropteroyltri-L-glutamate + L-homocysteine = tetrahydropteroyltri-L-glutamate + L-methionine. Its pathway is amino-acid biosynthesis; L-methionine biosynthesis via de novo pathway; L-methionine from L-homocysteine (MetE route): step 1/1. Functionally, catalyzes the transfer of a methyl group from 5-methyltetrahydrofolate to homocysteine resulting in methionine formation. In Burkholderia pseudomallei (strain 1106a), this protein is 5-methyltetrahydropteroyltriglutamate--homocysteine methyltransferase.